We begin with the raw amino-acid sequence, 161 residues long: Protein-export protein SecB (161 aa).

Belongs to the SecB family. Homotetramer, a dimer of dimers. One homotetramer interacts with 1 SecA dimer.

It localises to the cytoplasm. One of the proteins required for the normal export of preproteins out of the cell cytoplasm. It is a molecular chaperone that binds to a subset of precursor proteins, maintaining them in a translocation-competent state. It also specifically binds to its receptor SecA. The sequence is that of Protein-export protein SecB from Shewanella putrefaciens (strain CN-32 / ATCC BAA-453).